Consider the following 161-residue polypeptide: Small ribosomal subunit protein uS9 (161 aa).

The protein belongs to the universal ribosomal protein uS9 family.

This Methylobacterium radiotolerans (strain ATCC 27329 / DSM 1819 / JCM 2831 / NBRC 15690 / NCIMB 10815 / 0-1) protein is Small ribosomal subunit protein uS9.